We begin with the raw amino-acid sequence, 399 residues long: PCI domain-containing protein 2 (399 aa).

Ala2 carries the N-acetylalanine modification. At Ser45 the chain carries Phosphoserine. The region spanning 210 to 391 (ITYKYYVGRK…QKLVVSKQNP (182 aa)) is the PCI domain.

Belongs to the CSN12 family. Component of the nuclear pore complex (NPC)-associated TREX-2 complex (transcription and export complex 2), composed of at least GANP, 2 copies of ENY2, PCID2, SEM1/DSS1, and either centrin CETN2 or centrin CETN3. The TREX-2 complex also associates with ALYREF/ALY and with the nucleoporin NUP153. Interacts with BRCA2. Interacts with SRCAP chromatin remodeling complex component ZNHIT1; the interaction results in inhibition of SRCAP complex activity, preventing the deposition of histone variant H2AZ1/H2A.Z to lymphoid fate regulator genes and restricting lymphoid lineage commitment. In terms of tissue distribution, highly expressed in bone marrow and haematopoietic progenitor cells but is almost undetectable in mature blood cells.

The protein localises to the cytoplasm. It localises to the nucleus. The protein resides in the nuclear pore complex. Required for B-cell survival through the regulation of the expression of cell-cycle checkpoint MAD2L1 protein during B cell differentiation. As a component of the TREX-2 complex, involved in the export of mRNAs to the cytoplasm through the nuclear pores. Binds and stabilizes BRCA2 and is thus involved in the control of R-loop-associated DNA damage and transcription-associated genomic instability. Blocks the activity of the SRCAP chromatin remodeling complex by interacting with SRCAP complex member ZNHIT1 and inhibiting its interaction with the complex. This prevents the deposition of histone variant H2AZ1/H2A.Z at the nucleosomes of key lymphoid fate regulator genes which suppresses their expression and restricts lymphoid lineage commitment. The sequence is that of PCI domain-containing protein 2 (Pcid2) from Mus musculus (Mouse).